We begin with the raw amino-acid sequence, 308 residues long: Lipoyl synthase 2 (308 aa).

Residues C49, C54, C60, C75, C79, C82, and S300 each contribute to the [4Fe-4S] cluster site. The Radical SAM core domain maps to 61–289; it reads YASGTATFLL…KRIAEGLGFK (229 aa).

It belongs to the radical SAM superfamily. Lipoyl synthase family. The cofactor is [4Fe-4S] cluster.

It is found in the cytoplasm. The catalysed reaction is [[Fe-S] cluster scaffold protein carrying a second [4Fe-4S](2+) cluster] + N(6)-octanoyl-L-lysyl-[protein] + 2 oxidized [2Fe-2S]-[ferredoxin] + 2 S-adenosyl-L-methionine + 4 H(+) = [[Fe-S] cluster scaffold protein] + N(6)-[(R)-dihydrolipoyl]-L-lysyl-[protein] + 4 Fe(3+) + 2 hydrogen sulfide + 2 5'-deoxyadenosine + 2 L-methionine + 2 reduced [2Fe-2S]-[ferredoxin]. Its pathway is protein modification; protein lipoylation via endogenous pathway; protein N(6)-(lipoyl)lysine from octanoyl-[acyl-carrier-protein]: step 2/2. Functionally, catalyzes the radical-mediated insertion of two sulfur atoms into the C-6 and C-8 positions of the octanoyl moiety bound to the lipoyl domains of lipoate-dependent enzymes, thereby converting the octanoylated domains into lipoylated derivatives. The sequence is that of Lipoyl synthase 2 from Prochlorococcus marinus (strain SARG / CCMP1375 / SS120).